Here is a 1599-residue protein sequence, read N- to C-terminus: Lacto-N-biosidase (1599 aa).

The segment at residues 1–30 (MTSRQGRQAIAATAAMGVAVALALPTAAFA) is a signal peptide (tat-type signal). Histidine 150 provides a ligand contact to beta-D-galactosyl-(1-&gt;3)-N-acetyl-D-glucosamine. PbH1 repeat units lie at residues 165–190 (VSYI…DTWK), 224–255 (MSNV…YFMA), 277–299 (FDHV…AVGY), 325–347 (STNV…TLMY), 348–388 (CDRP…WPWR), and 389–437 (CKDP…SFAS). The Ca(2+) site is built by aspartate 178, aspartate 179, valine 182, and aspartate 238. Beta-D-galactosyl-(1-&gt;3)-N-acetyl-D-glucosamine contacts are provided by lysine 244 and histidine 245. 4 residues coordinate beta-D-galactosyl-(1-&gt;3)-N-acetyl-D-glucosamine: tryptophan 387, aspartate 411, aspartate 418, and cysteine 441. The active-site Proton donor/acceptor is aspartate 411. The Nucleophile role is filled by aspartate 418. A PbH1 7 repeat occupies 469–506 (GPGNHIYNNTVYVDADSQVLTKRSNSQSLFENNIFINA). One can recognise an FIVAR domain in the interval 1436–1498 (DKSTLKATVE…NALRDAIDGL (63 aa)). Positions 1494-1509 (AIDGLEKKPVDPDPNP) are enriched in basic and acidic residues. Positions 1494–1568 (AIDGLEKKPV…DGATTGGKLT (75 aa)) are disordered. Gly residues predominate over residues 1535 to 1558 (DGSGNGSGTGNGSGSGNGSTGSGS). The span at 1559–1568 (DGATTGGKLT) shows a compositional bias: low complexity. A helical membrane pass occupies residues 1574–1594 (VAGAAAMVALTAAAGIGLAAA).

The protein belongs to the glycosyl hydrolase 136 (GH136) family. Homodimer. The cofactor is Ca(2+). Mg(2+) is required as a cofactor. In terms of processing, predicted to be exported by the Tat system. The position of the signal peptide cleavage has not been experimentally proven.

The protein resides in the cell membrane. The enzyme catalyses beta-D-Gal-(1-&gt;3)-beta-D-GlcNAc-(1-&gt;3)-beta-D-Gal-(1-&gt;4)-D-Glc + H2O = beta-D-galactosyl-(1-&gt;3)-N-acetyl-D-glucosamine + lactose. Its activity is regulated as follows. Requires the chaperone LnbY for its proper folding and active expression. Is potently and competitively inhibited by LNB-PUGNAc and LNB-NHAcDNJ in vitro. In terms of biological role, present in the infant gut, this enzyme is involved in the assimilation of type-1 human milk oligosaccharides (HMOs). It hydrolyzes via a retaining mechanism the beta-D-GlcNAc-(1-&gt;3)-beta-D-Gal linkage in lacto-N-tetraose (LNT or beta-D-Gal-(1-&gt;3)-beta-D-GlcNAc-(1-&gt;3)-beta-D-Gal-(1-&gt;4)-D-Glc), an abundant HMO unique to human breast milk, releasing lacto-N-biose (LNB or beta-D-Gal-(1-&gt;3)-D-GlcNAc) and lactose. With a much lower efficiency, is also able to cleave the same linkage in lacto-N-fucopentaose I (alpha-Fuc(1-&gt;2)-beta-D-Gal-(1-&gt;3)-beta-D-GlcNAc(1-&gt;3)-beta-D-Gal-(1-&gt;4)-D-Glc), and sialyllacto-N-tetraose a (alpha-Neu5Ac-(2-&gt;3)-beta-D-Gal-(1-&gt;3)-beta-D-GlcNAc-(1-&gt;3)-beta-D-Gal-(1-&gt;4)-D-Glc). Is a key enzymatic factor for growth and proliferation of B.longum in the gut ecosystem of breast-fed infants. This Bifidobacterium longum subsp. longum (strain ATCC 15707 / DSM 20219 / JCM 1217 / NCTC 11818 / E194b) protein is Lacto-N-biosidase.